The sequence spans 341 residues: Retinol dehydrogenase 10-B (341 aa).

A helical; Signal-anchor membrane pass occupies residues 3–23 (IVLEFFLVTFRVLWAFVLAAA). Position 40-64 (40-64 (LITGAGSGLGRLFALEFARRRAQLV)) interacts with NADP(+). Position 197 (Ser-197) interacts with substrate. Tyr-210 serves as the catalytic Proton acceptor.

This sequence belongs to the short-chain dehydrogenases/reductases (SDR) family.

The protein localises to the microsome membrane. It is found in the endoplasmic reticulum membrane. The enzyme catalyses all-trans-retinol + NADP(+) = all-trans-retinal + NADPH + H(+). Its pathway is cofactor metabolism; retinol metabolism. Functionally, retinol dehydrogenase with a clear preference for NADP. Converts all-trans-retinol to all-trans-retinal. Has no detectable activity towards 11-cis-retinol, 9-cis-retinol and 13-cis-retinol. This is Retinol dehydrogenase 10-B (rdh10-b) from Xenopus laevis (African clawed frog).